Reading from the N-terminus, the 115-residue chain is Large ribosomal subunit protein uL24 (115 aa).

The protein belongs to the universal ribosomal protein uL24 family. As to quaternary structure, part of the 50S ribosomal subunit.

Functionally, one of two assembly initiator proteins, it binds directly to the 5'-end of the 23S rRNA, where it nucleates assembly of the 50S subunit. One of the proteins that surrounds the polypeptide exit tunnel on the outside of the subunit. This is Large ribosomal subunit protein uL24 from Synechocystis sp. (strain ATCC 27184 / PCC 6803 / Kazusa).